The primary structure comprises 260 residues: CD27 antigen (260 aa).

The signal sequence occupies residues 1-19 (MARPHPWWLCVLGTLVGLS). Over 20-191 (ATPAPKSCPE…RSLCSSDFIR (172 aa)) the chain is Extracellular. 3 TNFR-Cys repeats span residues 26-63 (SCPE…AQCD), 64-104 (PCIP…NAEC), and 105-141 (ACRN…PHPQ). Intrachain disulfides connect Cys27–Cys39, Cys40–Cys53, Cys43–Cys62, Cys65–Cys81, Cys84–Cys96, Cys87–Cys104, Cys106–Cys120, and Cys112–Cys117. N-linked (GlcNAc...) asparagine glycosylation occurs at Asn95. An O-linked (GalNAc...) serine glycan is attached at Ser127. Residues 192–212 (ILVIFSGMFLVFTLAGALFLH) form a helical membrane-spanning segment. The Cytoplasmic portion of the chain corresponds to 213–260 (QRRKYRSNKGESPVEPAEPCHYSCPREEEGSTIPIQEDYRKPEPACSP). Ser219 is modified (phosphoserine). A disordered region spans residues 219-260 (SNKGESPVEPAEPCHYSCPREEEGSTIPIQEDYRKPEPACSP). Basic and acidic residues predominate over residues 249-260 (EDYRKPEPACSP).

Homodimer. Interacts with SIVA1; may play a role in apoptosis through association with SIVA1. Interacts with TRAF2. Interacts ith PTPN6. In terms of processing, phosphorylated. N-glycosylated. Post-translationally, O-glycosylated with core 1 or possibly core 8 glycans. Found in most T-lymphocytes.

It localises to the cell membrane. Functionally, costimulatory immune-checkpoint receptor expressed at the surface of T-cells, NK-cells and B-cells which binds to and is activated by its ligand CD70/CD27L expressed by B-cells. The CD70-CD27 signaling pathway mediates antigen-specific T-cell activation and expansion which in turn provides immune surveillance of B-cells. Mechanistically, CD70 ligation activates the TRAF2-PTPN6 axis that subsequently inhibits LCK phosphorylation to promote phenotypic and transcriptional adaptations of T-cell memory. In addition, activation by CD70 on early progenitor cells provides a negative feedback signal to leukocyte differentiation during immune activation and thus modulates hematopoiesis. Negatively regulates the function of Th2 lymphocytes in the adipose tissue. The sequence is that of CD27 antigen from Homo sapiens (Human).